A 134-amino-acid chain; its full sequence is Syncollin (134 aa).

An N-terminal signal peptide occupies residues 1-21; it reads MSPLRPLLLALALASVPCAQG.

In terms of assembly, monomer and homooligomer; most probably hexameric. Interacts with GP2. Post-translationally, contains intrachain disulfide bonds.

The protein resides in the zymogen granule membrane. It localises to the zymogen granule lumen. Functionally, functions in exocytosis in pancreatic acinar cells regulating the fusion of zymogen granules with each other. May have a pore-forming activity on membranes and regulate exocytosis in other exocrine tissues. The polypeptide is Syncollin (SYCN) (Homo sapiens (Human)).